We begin with the raw amino-acid sequence, 361 residues long: Zygote arrest protein 1 (361 aa).

Disordered stretches follow at residues 68-129 (GPRP…PRSW) and 142-252 (GLSS…EQDK). A compositionally biased stretch (low complexity) spans 116 to 128 (PRSPARAGRPPRS). Phosphothreonine is present on Thr155. Over residues 238-252 (ASRDRASPQSTEQDK) the composition is skewed to basic and acidic residues. A 3CxxC-type zinc finger spans residues 263 to 346 (KYGYYHCKDC…RQDLCGRCKD (84 aa)).

Belongs to the ZAR1 family. Interacts with YBX2. Post-translationally, phosphorylation by CDK1 does not regulate formation of MARDO (mitochondria-associated ribonucleoprotein domain) membraneless compartment. Ubiquitinated and degradaded by the proteasome during oocyte meiotic maturation, leading to MARDO (mitochondria-associated ribonucleoprotein domain) membraneless compartment dissolution.

It is found in the cytoplasm. The protein resides in the cytoplasmic ribonucleoprotein granule. Functionally, mRNA-binding protein that mediates formation of MARDO (mitochondria-associated ribonucleoprotein domain), a membraneless compartment that stores maternal mRNAs in oocytes. MARDO assembly around mitochondria is directed by an increase in mitochondrial membrane potential during oocyte growth. Promotes formation of MARDO phase-separated membraneless compartment by undergoing liquid-liquid phase separation upon binding to maternal mRNAs. Binds to the 3'-UTR of maternal mRNAs. Maternal mRNAs stored in the MARDO are translationally repressed. Essential for female fertility and oocyte-to-embryo transition by coordinating maternal mRNA storage, translation and degradation. In Rattus norvegicus (Rat), this protein is Zygote arrest protein 1.